The primary structure comprises 347 residues: Bifunctional dihydroflavonol 4-reductase/flavanone 4-reductase (347 aa).

NADP(+) contacts are provided by K44 and Y163.

It belongs to the NAD(P)-dependent epimerase/dehydratase family. Dihydroflavonol-4-reductase subfamily.

It carries out the reaction a (2R,3S,4S)-leucoanthocyanidin + NADP(+) = a (2R,3R)-dihydroflavonol + NADPH + H(+). The catalysed reaction is (2S)-flavan-4-ol + NADP(+) = (2S)-flavanone + NADPH + H(+). Bifunctional enzyme involved in the flavonoid metabolism. May use dihydroquercetin, eriodictyol, garbanzol (5-deoxydihydrokaempferol), dihydrofisetin (5-deoxydihydroquercetin), dihydrokaempferol to a low extent (5%), but not naringenin, 5-deoxynaringenin or butin (5-deoxyeriodictyol) as substrate. This Pyrus communis (Pear) protein is Bifunctional dihydroflavonol 4-reductase/flavanone 4-reductase (DFR).